The chain runs to 120 residues: Large ribosomal subunit protein uL18 (120 aa).

Residues 1–22 (MITKTSKNAARQKRHARVRAKL) are disordered. The span at 10 to 20 (ARQKRHARVRA) shows a compositional bias: basic residues.

Belongs to the universal ribosomal protein uL18 family. In terms of assembly, part of the 50S ribosomal subunit; part of the 5S rRNA/L5/L18/L25 subcomplex. Contacts the 5S and 23S rRNAs.

Functionally, this is one of the proteins that bind and probably mediate the attachment of the 5S RNA into the large ribosomal subunit, where it forms part of the central protuberance. This chain is Large ribosomal subunit protein uL18, found in Bacillus velezensis (strain DSM 23117 / BGSC 10A6 / LMG 26770 / FZB42) (Bacillus amyloliquefaciens subsp. plantarum).